The primary structure comprises 889 residues: DNA mismatch repair protein MutS (889 aa).

Residue Gly620–Ser627 participates in ATP binding. Residues Ala812–Gly831 form a disordered region.

This sequence belongs to the DNA mismatch repair MutS family.

In terms of biological role, this protein is involved in the repair of mismatches in DNA. It is possible that it carries out the mismatch recognition step. This protein has a weak ATPase activity. The chain is DNA mismatch repair protein MutS from Syntrophobacter fumaroxidans (strain DSM 10017 / MPOB).